The following is a 311-amino-acid chain: Methionyl-tRNA formyltransferase (311 aa).

110–113 (SLLP) contacts (6S)-5,6,7,8-tetrahydrofolate.

It belongs to the Fmt family.

The enzyme catalyses L-methionyl-tRNA(fMet) + (6R)-10-formyltetrahydrofolate = N-formyl-L-methionyl-tRNA(fMet) + (6S)-5,6,7,8-tetrahydrofolate + H(+). Functionally, attaches a formyl group to the free amino group of methionyl-tRNA(fMet). The formyl group appears to play a dual role in the initiator identity of N-formylmethionyl-tRNA by promoting its recognition by IF2 and preventing the misappropriation of this tRNA by the elongation apparatus. The polypeptide is Methionyl-tRNA formyltransferase (Streptococcus pneumoniae (strain Taiwan19F-14)).